Here is a 37-residue protein sequence, read N- to C-terminus: Large ribosomal subunit protein bL36 (37 aa).

The protein belongs to the bacterial ribosomal protein bL36 family.

The polypeptide is Large ribosomal subunit protein bL36 (Campylobacter jejuni subsp. jejuni serotype O:6 (strain 81116 / NCTC 11828)).